We begin with the raw amino-acid sequence, 562 residues long: SLAIN motif-containing protein-like (562 aa).

Disordered stretches follow at residues 292-313 (QDYA…LHSL), 344-381 (HRYS…IQNH), and 409-562 (SLEA…DGCY). 2 stretches are compositionally biased toward low complexity: residues 295 to 311 (ASSS…ASLH) and 345 to 355 (RYSPSPLSSPR). Composition is skewed to polar residues over residues 356-370 (CQSP…TTSR), 424-442 (QGPS…STPP), 465-531 (VSTS…STVP), and 539-553 (SRRS…STLG).

Belongs to the SLAIN motif-containing family.

The sequence is that of SLAIN motif-containing protein-like from Xenopus laevis (African clawed frog).